The primary structure comprises 374 residues: Pectinesterase (374 aa).

The first 31 residues, 1–31, serve as a signal peptide directing secretion; sequence MVKLLNSTRELSINALSMLNSFGDMVAQATG. 2 N-linked (GlcNAc...) asparagine glycosylation sites follow: asparagine 58 and asparagine 124. Substrate is bound by residues threonine 133 and glutamine 163. Aspartate 186 (proton donor) is an active-site residue. Cysteine 200 and cysteine 220 are disulfide-bonded. Aspartate 207 serves as the catalytic Nucleophile. N-linked (GlcNAc...) asparagine glycosylation occurs at asparagine 230. Residues arginine 275 and tryptophan 277 each contribute to the substrate site. Asparagine 303 carries N-linked (GlcNAc...) asparagine glycosylation.

This sequence belongs to the pectinesterase family. As to expression, pollen, and at much lower levels in pistils and petals.

The protein localises to the secreted. The protein resides in the cell wall. The catalysed reaction is [(1-&gt;4)-alpha-D-galacturonosyl methyl ester](n) + n H2O = [(1-&gt;4)-alpha-D-galacturonosyl](n) + n methanol + n H(+). The protein operates within glycan metabolism; pectin degradation; 2-dehydro-3-deoxy-D-gluconate from pectin: step 1/5. May play a role in pollen germination and/or tube growth. This is Pectinesterase (PPE1) from Petunia integrifolia (Violet-flowered petunia).